Consider the following 141-residue polypeptide: 6,7-dimethyl-8-ribityllumazine synthase (141 aa).

Residues F14, 46-48 (VFD), and 70-72 (CVI) contribute to the 5-amino-6-(D-ribitylamino)uracil site. 75-76 (ET) serves as a coordination point for (2S)-2-hydroxy-3-oxobutyl phosphate. The Proton donor role is filled by H78. L103 serves as a coordination point for 5-amino-6-(D-ribitylamino)uracil. Position 118 (R118) interacts with (2S)-2-hydroxy-3-oxobutyl phosphate.

Forms an icosahedral capsid composed of 60 subunits, arranged as a dodecamer of pentamers.

The enzyme catalyses (2S)-2-hydroxy-3-oxobutyl phosphate + 5-amino-6-(D-ribitylamino)uracil = 6,7-dimethyl-8-(1-D-ribityl)lumazine + phosphate + 2 H2O + H(+). It functions in the pathway cofactor biosynthesis; riboflavin biosynthesis; riboflavin from 2-hydroxy-3-oxobutyl phosphate and 5-amino-6-(D-ribitylamino)uracil: step 1/2. In terms of biological role, catalyzes the formation of 6,7-dimethyl-8-ribityllumazine by condensation of 5-amino-6-(D-ribitylamino)uracil with 3,4-dihydroxy-2-butanone 4-phosphate. This is the penultimate step in the biosynthesis of riboflavin. The protein is 6,7-dimethyl-8-ribityllumazine synthase (ribH) of Methanocaldococcus jannaschii (strain ATCC 43067 / DSM 2661 / JAL-1 / JCM 10045 / NBRC 100440) (Methanococcus jannaschii).